Reading from the N-terminus, the 322-residue chain is ATP-dependent 6-phosphofructokinase (322 aa).

Residues Gly12, 73–74, and 103–106 contribute to the ATP site; these read RF and GDGT. A Mg(2+)-binding site is contributed by Asp104. 126 to 128 lines the substrate pocket; sequence TID. The active-site Proton acceptor is the Asp128. Residue Arg155 coordinates ADP. Substrate contacts are provided by residues Arg163 and 170–172; that span reads MGR. Residues 186 to 188, Lys212, and 214 to 216 contribute to the ADP site; these read GSE and KPS. Substrate-binding positions include Glu223, Arg245, and 251-254; that span reads HTQR.

It belongs to the phosphofructokinase type A (PFKA) family. ATP-dependent PFK group I subfamily. Prokaryotic clade 'B1' sub-subfamily. In terms of assembly, homotetramer. It depends on Mg(2+) as a cofactor.

Its subcellular location is the cytoplasm. It carries out the reaction beta-D-fructose 6-phosphate + ATP = beta-D-fructose 1,6-bisphosphate + ADP + H(+). The protein operates within carbohydrate degradation; glycolysis; D-glyceraldehyde 3-phosphate and glycerone phosphate from D-glucose: step 3/4. Allosterically activated by ADP and other diphosphonucleosides, and allosterically inhibited by phosphoenolpyruvate. Its function is as follows. Catalyzes the phosphorylation of D-fructose 6-phosphate to fructose 1,6-bisphosphate by ATP, the first committing step of glycolysis. This Mesomycoplasma hyopneumoniae (strain J / ATCC 25934 / NCTC 10110) (Mycoplasma hyopneumoniae) protein is ATP-dependent 6-phosphofructokinase.